The sequence spans 233 residues: uncharacterized protein (233 aa).

This sequence belongs to the LutC/YkgG family.

This is an uncharacterized protein from Neisseria meningitidis serogroup B (strain ATCC BAA-335 / MC58).